Consider the following 525-residue polypeptide: CTP synthase (525 aa).

Residues 1–269 (MKYIIVTGGV…ADAITTHLHL (269 aa)) form an amidoligase domain region. S12 lines the CTP pocket. S12 contributes to the UTP binding site. ATP is bound by residues 13–18 (GLGKGI) and D70. D70 and E144 together coordinate Mg(2+). CTP is bound by residues 151–153 (DIE), 190–195 (KTKPTQ), and K226. Residues 190-195 (KTKPTQ) and K226 each bind UTP. Residues 292-524 (VAIVSKYGIE…VSACRKNKKT (233 aa)) form the Glutamine amidotransferase type-1 domain. G348 contacts L-glutamine. The Nucleophile; for glutamine hydrolysis role is filled by C375. Residues 376 to 379 (LGFQ), E399, and R454 each bind L-glutamine. Residues H497 and E499 contribute to the active site.

Belongs to the CTP synthase family. In terms of assembly, homotetramer.

It catalyses the reaction UTP + L-glutamine + ATP + H2O = CTP + L-glutamate + ADP + phosphate + 2 H(+). It carries out the reaction L-glutamine + H2O = L-glutamate + NH4(+). The catalysed reaction is UTP + NH4(+) + ATP = CTP + ADP + phosphate + 2 H(+). It participates in pyrimidine metabolism; CTP biosynthesis via de novo pathway; CTP from UDP: step 2/2. Allosterically activated by GTP, when glutamine is the substrate; GTP has no effect on the reaction when ammonia is the substrate. The allosteric effector GTP functions by stabilizing the protein conformation that binds the tetrahedral intermediate(s) formed during glutamine hydrolysis. Inhibited by the product CTP, via allosteric rather than competitive inhibition. Catalyzes the ATP-dependent amination of UTP to CTP with either L-glutamine or ammonia as the source of nitrogen. Regulates intracellular CTP levels through interactions with the four ribonucleotide triphosphates. The chain is CTP synthase from Methanosphaerula palustris (strain ATCC BAA-1556 / DSM 19958 / E1-9c).